The primary structure comprises 341 residues: Outer membrane protein assembly factor BamD (341 aa).

An N-terminal signal peptide occupies residues 1–17 (MQVKHLLLIAILALTAA). The N-palmitoyl cysteine moiety is linked to residue Cys-18. Cys-18 carries the S-diacylglycerol cysteine lipid modification. A compositionally biased stretch (basic and acidic residues) spans 289–316 (DVIKQYEDAEREIPAELKPENQDHSADD). The disordered stretch occupies residues 289 to 330 (DVIKQYEDAEREIPAELKPENQDHSADDEKPESDDDEDSGRS). Residues 317-326 (EKPESDDDED) show a composition bias toward acidic residues.

It belongs to the BamD family. In terms of assembly, part of the Bam complex.

The protein resides in the cell outer membrane. Functionally, part of the outer membrane protein assembly complex, which is involved in assembly and insertion of beta-barrel proteins into the outer membrane. The sequence is that of Outer membrane protein assembly factor BamD from Pseudomonas aeruginosa (strain ATCC 15692 / DSM 22644 / CIP 104116 / JCM 14847 / LMG 12228 / 1C / PRS 101 / PAO1).